A 616-amino-acid polypeptide reads, in one-letter code: Chaperone protein HscA (616 aa).

The protein belongs to the heat shock protein 70 family.

Functionally, chaperone involved in the maturation of iron-sulfur cluster-containing proteins. Has a low intrinsic ATPase activity which is markedly stimulated by HscB. Involved in the maturation of IscU. The polypeptide is Chaperone protein HscA (Salmonella enteritidis PT4 (strain P125109)).